The sequence spans 321 residues: Coproporphyrin III ferrochelatase (321 aa).

Residues His185 and Glu267 each coordinate Fe(2+).

This sequence belongs to the ferrochelatase family.

Its subcellular location is the cytoplasm. It catalyses the reaction Fe-coproporphyrin III + 2 H(+) = coproporphyrin III + Fe(2+). The protein operates within porphyrin-containing compound metabolism; protoheme biosynthesis. In terms of biological role, involved in coproporphyrin-dependent heme b biosynthesis. Catalyzes the insertion of ferrous iron into coproporphyrin III to form Fe-coproporphyrin III. The polypeptide is Coproporphyrin III ferrochelatase (Lacticaseibacillus casei (strain BL23) (Lactobacillus casei)).